The sequence spans 217 residues: MSATNNQNAASVFGRPWIFIRGVPSMKFLPPEGPTEIAFAGRSNVGKSSLINALVGHKGLARTSNTPGRTQELNYFVPDGYSGEADDLPPMALVDMPGYGYAQAPKEQVDAWTKLVFDYLRGRSTLKRVYVLIDARHGIKKNDEEVLALLDKAAVSYQIVLTKTDKIKAAGVPRLLAETLEKIRKRPAAFPEVLSTSSEKGEGIEELRAAIELAVAR.

The 185-residue stretch at 33-217 (GPTEIAFAGR…RAAIELAVAR (185 aa)) folds into the EngB-type G domain. GTP-binding positions include 41–48 (GRSNVGKS), 68–72 (GRTQE), 95–98 (DMPG), 162–165 (TKTD), and 196–198 (TSS). Mg(2+) is bound by residues serine 48 and threonine 70.

It belongs to the TRAFAC class TrmE-Era-EngA-EngB-Septin-like GTPase superfamily. EngB GTPase family. The cofactor is Mg(2+).

Necessary for normal cell division and for the maintenance of normal septation. This is Probable GTP-binding protein EngB from Sinorhizobium medicae (strain WSM419) (Ensifer medicae).